We begin with the raw amino-acid sequence, 376 residues long: MAINVSTNVSAMTAQRYLNNAADGTQKSMERLSSGYKINSARDDAAGLQISNRLTSQSRGLDMAVRNANDGISIAQTAEGAMNETTNILQRMRDLSLQSANGSNSSSERQAIQEEVSALNDELNRIAETTSFGGNKLLNGSFGNKSFQIGADSGEAVMLSMSDMRSDTKAMGGKSYVATNGKAPDWSVTNATDLTLSYTDKQGEAREVTINAKAGDDLEEVATYINGQNGDIKASVGDEGKLQLFAANQKVSSDVTIGGGLGTEIGFAAGKDVTVKDINVTTVGGSQEAVALIDGALKAVDSQRASLGAFQNRFGHAISNLDNINENVNASRSRIKDTDYARETTQMTKSQILQQASTSVLAQAKQSPSAALSLLG.

Residues 103–130 (SNSSSERQAIQEEVSALNDELNRIAETT) adopt a coiled-coil conformation.

It belongs to the bacterial flagellin family. As to quaternary structure, heteromer of multiple flagellin subunits including FlaA, FlaB, FlaC, FlaD and possibly FlaE.

The protein localises to the secreted. Its subcellular location is the bacterial flagellum. Its function is as follows. Flagellin is the subunit protein which polymerizes to form the filaments of bacterial flagella. FlaB is not essential for flagellar synthesis and motility. In Vibrio anguillarum (Listonella anguillarum), this protein is Flagellin B (flaB).